The sequence spans 1195 residues: Cullin-associated NEDD8-dissociated protein 1 (1195 aa).

8 HEAT repeats span residues 1 to 37, 45 to 83, 168 to 206, 397 to 434, 436 to 474, 703 to 742, 846 to 885, and 999 to 1037; these read MHDINFNILKDRAMDVDPDIRFMALEDLRKFLQDESA, NQSLENFFPILLNMLNDQNPDVQTQAIKSFEPMVKYLSN, NPVTIDSIELLIDLVTEIGYVLTQDELLNLSLYLTKVAL, ELLSKEVLPVFSFADSNDQVVSEVIKSSIAIVNSTSPR, STNVSELFPIIAARMKLAKETQVPLFLKLVESLNRFDNT, ETHRAPLLQTIVKLVNEGKIEVADNSFFQFITTACNQIPD, QKHIDSAVPIILNAYESSEKTIIRGSLVDSLSIAADACNE, and PILDSIILPKIFDQLQAEDSFKKIITMGPYKYVLDEGLE.

This sequence belongs to the CAND family.

Its function is as follows. Key assembly factor of SCF (SKP1-CUL1-F-box protein) E3 ubiquitin ligase complexes that promotes the exchange of the substrate-recognition F-box subunit in SCF complexes, thereby playing a key role in the cellular repertoire of SCF complexes. Acts as a F-box protein exchange factor. The protein is Cullin-associated NEDD8-dissociated protein 1 (TIP120) of Candida albicans (strain SC5314 / ATCC MYA-2876) (Yeast).